A 237-amino-acid chain; its full sequence is Octanoyltransferase (237 aa).

In terms of domain architecture, BPL/LPL catalytic spans 27–210 (SGGDDILLLL…EFYHIFQPAG (184 aa)). Substrate is bound by residues 72 to 79 (RGGNVTCH), 139 to 141 (SLG), and 152 to 154 (GMA). Cys170 acts as the Acyl-thioester intermediate in catalysis.

This sequence belongs to the LipB family.

It is found in the cytoplasm. It carries out the reaction octanoyl-[ACP] + L-lysyl-[protein] = N(6)-octanoyl-L-lysyl-[protein] + holo-[ACP] + H(+). Its pathway is protein modification; protein lipoylation via endogenous pathway; protein N(6)-(lipoyl)lysine from octanoyl-[acyl-carrier-protein]: step 1/2. Functionally, catalyzes the transfer of endogenously produced octanoic acid from octanoyl-acyl-carrier-protein onto the lipoyl domains of lipoate-dependent enzymes. Lipoyl-ACP can also act as a substrate although octanoyl-ACP is likely to be the physiological substrate. The chain is Octanoyltransferase from Desulfovibrio desulfuricans (strain ATCC 27774 / DSM 6949 / MB).